The primary structure comprises 828 residues: Sarcolemmal membrane-associated protein (828 aa).

Positions 1 to 163 are necessary for targeting to centrosomes; that stretch reads MPSALAIFTC…AANTPSMYSQ (163 aa). The Cytoplasmic segment spans residues 1–802; that stretch reads MPSALAIFTC…REKGNNKPWP (802 aa). The FHA domain maps to 28–85; that stretch reads IKIGRSVARCRPAQNNATFDCKVLSRNHALVWFDHKTGKFYLQDTKSSNGTFINSQRL. Ser148 bears the Phosphoserine mark. Coiled-coil stretches lie at residues 167–202 and 230–388; these read QLSQYLQEALHREQMLEQKLATLQRLLAITQEASDT and NQTE…QEKT. The helical; Anchor for type IV membrane protein transmembrane segment at 339–359 threads the bilayer; the sequence is KKELQHKIDEMEEKEQELQAK. Residues 433-446 show a composition bias toward basic and acidic residues; sequence KLSKENQTRAKESD. The interval 433 to 467 is disordered; the sequence is KLSKENQTRAKESDFSDTLSPSKEKSSDDTTDAQM. Phosphoserine is present on residues Ser448 and Ser452. Residues 477-799 adopt a coiled-coil conformation; it reads AKVSLLKDDL…KLLREKGNNK (323 aa). A helical; Anchor for type IV membrane protein membrane pass occupies residues 803-823; it reads WMPMLAALVAVTAIVLYVPGL. Residues 824-828 are Extracellular-facing; sequence ARASP.

It belongs to the SLMAP family. In terms of assembly, homodimer. Interacts with myosin. Interacts with SIKE1 and both associate with the STRIPAK core complex composed of PP2A catalytic and scaffolding subunits, the striatins (PP2A regulatory subunits), the striatin-associated proteins MOB4, STRIP1 and STRIP2, PDCD10 and members of the STE20 kinases, such as STK24 and STK26. Interacts (via FHA domain) with STK3 (when phosphorylated); the interaction associates STK3 with the STRIPAK complex.

Its subcellular location is the cell membrane. It is found in the sarcolemma. It localises to the cytoplasm. The protein localises to the myofibril. The protein resides in the sarcomere. Its subcellular location is the m line. It is found in the z line. It localises to the cytoskeleton. The protein localises to the microtubule organizing center. The protein resides in the centrosome. Its subcellular location is the endoplasmic reticulum membrane. It is found in the mitochondrion membrane. Functionally, associates with the striatin-interacting phosphatase and kinase (STRIPAK) core complex, forming the extended (SIKE1:SLMAP)STRIPAK complex. The (SIKE1:SLMAP)STRIPAK complex dephosphorylates STK3 leading to the inhibition of Hippo signaling and the control of cell growth. May play a role during myoblast fusion. The chain is Sarcolemmal membrane-associated protein from Homo sapiens (Human).